The sequence spans 438 residues: tRNA-2-methylthio-N(6)-dimethylallyladenosine synthase (438 aa).

The region spanning 4 to 120 (KKLYIDTVGC…VPEMVKDAEA (117 aa)) is the MTTase N-terminal domain. The [4Fe-4S] cluster site is built by Cys-13, Cys-49, Cys-83, Cys-158, Cys-162, and Cys-165. One can recognise a Radical SAM core domain in the interval 144–377 (GRKRVSAFVT…QAVHSRIHNE (234 aa)). Residues 377-438 (ETYVGSTQQV…YANSLLGELL (62 aa)) enclose the TRAM domain.

Belongs to the methylthiotransferase family. MiaB subfamily. Monomer. [4Fe-4S] cluster serves as cofactor.

It localises to the cytoplasm. The enzyme catalyses N(6)-dimethylallyladenosine(37) in tRNA + (sulfur carrier)-SH + AH2 + 2 S-adenosyl-L-methionine = 2-methylsulfanyl-N(6)-dimethylallyladenosine(37) in tRNA + (sulfur carrier)-H + 5'-deoxyadenosine + L-methionine + A + S-adenosyl-L-homocysteine + 2 H(+). In terms of biological role, catalyzes the methylthiolation of N6-(dimethylallyl)adenosine (i(6)A), leading to the formation of 2-methylthio-N6-(dimethylallyl)adenosine (ms(2)i(6)A) at position 37 in tRNAs that read codons beginning with uridine. The protein is tRNA-2-methylthio-N(6)-dimethylallyladenosine synthase of Trichlorobacter lovleyi (strain ATCC BAA-1151 / DSM 17278 / SZ) (Geobacter lovleyi).